The primary structure comprises 84 residues: Extender of the chronological lifespan protein 2 (84 aa).

This sequence belongs to the ecl1 family.

The protein resides in the nucleus. Involved in chronological cell aging. The protein is Extender of the chronological lifespan protein 2 (ecl2) of Schizosaccharomyces pombe (strain 972 / ATCC 24843) (Fission yeast).